The chain runs to 374 residues: UDP-N-acetylglucosamine--N-acetylmuramyl-(pentapeptide) pyrophosphoryl-undecaprenol N-acetylglucosamine transferase (374 aa).

Residues 13–15 (TGG), Asn-124, Arg-165, Ser-193, and Gln-294 each bind UDP-N-acetyl-alpha-D-glucosamine.

Belongs to the glycosyltransferase 28 family. MurG subfamily.

The protein localises to the cell inner membrane. It carries out the reaction di-trans,octa-cis-undecaprenyl diphospho-N-acetyl-alpha-D-muramoyl-L-alanyl-D-glutamyl-meso-2,6-diaminopimeloyl-D-alanyl-D-alanine + UDP-N-acetyl-alpha-D-glucosamine = di-trans,octa-cis-undecaprenyl diphospho-[N-acetyl-alpha-D-glucosaminyl-(1-&gt;4)]-N-acetyl-alpha-D-muramoyl-L-alanyl-D-glutamyl-meso-2,6-diaminopimeloyl-D-alanyl-D-alanine + UDP + H(+). It functions in the pathway cell wall biogenesis; peptidoglycan biosynthesis. Functionally, cell wall formation. Catalyzes the transfer of a GlcNAc subunit on undecaprenyl-pyrophosphoryl-MurNAc-pentapeptide (lipid intermediate I) to form undecaprenyl-pyrophosphoryl-MurNAc-(pentapeptide)GlcNAc (lipid intermediate II). The protein is UDP-N-acetylglucosamine--N-acetylmuramyl-(pentapeptide) pyrophosphoryl-undecaprenol N-acetylglucosamine transferase of Rhizobium leguminosarum bv. trifolii (strain WSM2304).